A 214-amino-acid chain; its full sequence is Pyridoxine/pyridoxamine 5'-phosphate oxidase (214 aa).

Substrate-binding positions include 9–12 (RKDY) and K67. Residues 62–67 (RMVLLK), 77–78 (FT), R83, K84, and Q106 contribute to the FMN site. Substrate-binding residues include Y124, R128, and S132. FMN-binding positions include 141-142 (QS) and W186. Position 192–194 (192–194 (RLH)) interacts with substrate. R196 contacts FMN.

It belongs to the pyridoxamine 5'-phosphate oxidase family. Homodimer. The cofactor is FMN.

It carries out the reaction pyridoxamine 5'-phosphate + O2 + H2O = pyridoxal 5'-phosphate + H2O2 + NH4(+). The catalysed reaction is pyridoxine 5'-phosphate + O2 = pyridoxal 5'-phosphate + H2O2. The protein operates within cofactor metabolism; pyridoxal 5'-phosphate salvage; pyridoxal 5'-phosphate from pyridoxamine 5'-phosphate: step 1/1. Its pathway is cofactor metabolism; pyridoxal 5'-phosphate salvage; pyridoxal 5'-phosphate from pyridoxine 5'-phosphate: step 1/1. Its function is as follows. Catalyzes the oxidation of either pyridoxine 5'-phosphate (PNP) or pyridoxamine 5'-phosphate (PMP) into pyridoxal 5'-phosphate (PLP). In Nostoc sp. (strain PCC 7120 / SAG 25.82 / UTEX 2576), this protein is Pyridoxine/pyridoxamine 5'-phosphate oxidase.